The chain runs to 251 residues: Probable transcriptional regulatory protein jk1057 (251 aa).

Residues 1 to 22 are disordered; that stretch reads MAGHSKWATTKHKKAANDAKRG.

It belongs to the TACO1 family.

Its subcellular location is the cytoplasm. This is Probable transcriptional regulatory protein jk1057 from Corynebacterium jeikeium (strain K411).